The primary structure comprises 300 residues: Bifunctional protein FolD 2 (300 aa).

Residues 166–168 (GRS), Ser-191, and Ile-232 each bind NADP(+).

The protein belongs to the tetrahydrofolate dehydrogenase/cyclohydrolase family. In terms of assembly, homodimer.

It catalyses the reaction (6R)-5,10-methylene-5,6,7,8-tetrahydrofolate + NADP(+) = (6R)-5,10-methenyltetrahydrofolate + NADPH. The catalysed reaction is (6R)-5,10-methenyltetrahydrofolate + H2O = (6R)-10-formyltetrahydrofolate + H(+). It participates in one-carbon metabolism; tetrahydrofolate interconversion. Catalyzes the oxidation of 5,10-methylenetetrahydrofolate to 5,10-methenyltetrahydrofolate and then the hydrolysis of 5,10-methenyltetrahydrofolate to 10-formyltetrahydrofolate. This chain is Bifunctional protein FolD 2, found in Roseobacter denitrificans (strain ATCC 33942 / OCh 114) (Erythrobacter sp. (strain OCh 114)).